Here is a 268-residue protein sequence, read N- to C-terminus: Glutamate racemase (268 aa).

Substrate contacts are provided by residues 14 to 15 and 46 to 47; these read DS and YG. The active-site Proton donor/acceptor is the cysteine 78. 79 to 80 is a binding site for substrate; that stretch reads NT. Cysteine 192 acts as the Proton donor/acceptor in catalysis. A substrate-binding site is contributed by 193-194; it reads TH.

This sequence belongs to the aspartate/glutamate racemases family.

The catalysed reaction is L-glutamate = D-glutamate. It participates in cell wall biogenesis; peptidoglycan biosynthesis. Provides the (R)-glutamate required for cell wall biosynthesis. In Sphingopyxis alaskensis (strain DSM 13593 / LMG 18877 / RB2256) (Sphingomonas alaskensis), this protein is Glutamate racemase.